The chain runs to 320 residues: Acetaldehyde dehydrogenase 2 (320 aa).

The Acyl-thioester intermediate role is filled by cysteine 129. NAD(+) is bound by residues 160–168 and asparagine 287; that span reads SAGPGTRAN.

It belongs to the acetaldehyde dehydrogenase family.

The catalysed reaction is acetaldehyde + NAD(+) + CoA = acetyl-CoA + NADH + H(+). The polypeptide is Acetaldehyde dehydrogenase 2 (Burkholderia cenocepacia (strain ATCC BAA-245 / DSM 16553 / LMG 16656 / NCTC 13227 / J2315 / CF5610) (Burkholderia cepacia (strain J2315))).